The following is a 173-amino-acid chain: NADH-ubiquinone oxidoreductase chain 6 (173 aa).

5 helical membrane passes run 1–21 (MTYF…AVAS), 25–45 (PYFA…VLVG), 53–73 (LVLF…SAAL), 87–107 (VLGY…FFWG), and 141–161 (GGML…VLEL).

This sequence belongs to the complex I subunit 6 family.

The protein resides in the mitochondrion membrane. It carries out the reaction a ubiquinone + NADH + 5 H(+)(in) = a ubiquinol + NAD(+) + 4 H(+)(out). Core subunit of the mitochondrial membrane respiratory chain NADH dehydrogenase (Complex I) that is believed to belong to the minimal assembly required for catalysis. Complex I functions in the transfer of electrons from NADH to the respiratory chain. The immediate electron acceptor for the enzyme is believed to be ubiquinone. The polypeptide is NADH-ubiquinone oxidoreductase chain 6 (MT-ND6) (Carassius auratus (Goldfish)).